The chain runs to 596 residues: Aspartate--tRNA(Asp/Asn) ligase (596 aa).

An L-aspartate-binding site is contributed by Glu-182. The aspartate stretch occupies residues 206–209 (QLFK). Position 228 (Arg-228) interacts with L-aspartate. Residues 228–230 (RDE) and Gln-237 contribute to the ATP site. His-456 is an L-aspartate binding site. Residue Glu-490 participates in ATP binding. Arg-497 provides a ligand contact to L-aspartate. 542 to 545 (GLDR) is an ATP binding site.

The protein belongs to the class-II aminoacyl-tRNA synthetase family. Type 1 subfamily. In terms of assembly, homodimer.

The protein resides in the cytoplasm. It carries out the reaction tRNA(Asx) + L-aspartate + ATP = L-aspartyl-tRNA(Asx) + AMP + diphosphate. Functionally, aspartyl-tRNA synthetase with relaxed tRNA specificity since it is able to aspartylate not only its cognate tRNA(Asp) but also tRNA(Asn). Reaction proceeds in two steps: L-aspartate is first activated by ATP to form Asp-AMP and then transferred to the acceptor end of tRNA(Asp/Asn). The polypeptide is Aspartate--tRNA(Asp/Asn) ligase (Syntrophotalea carbinolica (strain DSM 2380 / NBRC 103641 / GraBd1) (Pelobacter carbinolicus)).